Here is a 279-residue protein sequence, read N- to C-terminus: Histone chaperone ASF1 (279 aa).

The segment at 1-143 (MSIVSLLGIK…HIVRNILAEK (143 aa)) is interaction with HIR1. The segment at 1 to 155 (MSIVSLLGIK…VTRFNIVWDN (155 aa)) is interaction with histone H3, histone H4, RAD53 and the RF-C complex. The tract at residues 156 to 279 (ENEGDLYPPE…TPKDAARSTN (124 aa)) is disordered. The span at 168–244 (GVDDEEEEDD…DEEEGEEEVG (77 aa)) shows a compositional bias: acidic residues. Residues 192–243 (DDQEDGEGEAEEAAEEEEEEEEKTEDNETNLEEEEEDIENSDGDEEEGEEEV) adopt a coiled-coil conformation. Composition is skewed to basic and acidic residues over residues 245 to 254 (SVDKNEDGND) and 269 to 279 (STPKDAARSTN).

It belongs to the ASF1 family. Interacts with histone H3/H4 heterodimers via both histone H3 and histone H4. Binds with higher affinity to H3/H4 heterodimers where histone H3 has been pre-acetylated on 'Lys-14'. Interacts with RAD53 and this may impair interaction with histones and chromatin assembly; the interaction is reduced upon activation of DNA damage or replication checkpoints which in turn promotes histone binding and chromatin assembly. Interacts with the CAC2 subunit of chromatin assembly factor 1 (CAF-1). Interacts with the HIR1, HIR2, HIR3 and HPC2 subunits of the HIR complex. Interacts with the RFC1, RFC2, RFC3, RFC4 and RFC5 subunits of the replication factor C (RF-C/RFC) complex; which may recruit this protein to DNA. Interacts with the SAS2, SAS4 and SAS5 subunits of the SAS/SAS-I complex. Interacts with the BDF1, BDF2, SPT15, TAF1 and TAF7 subunits of the TFIID complex. Interacts with RTT109 and VPS75; the interaction with RTT109 is direct.

The protein resides in the nucleus. Histone chaperone that facilitates histone deposition and histone exchange and removal during nucleosome assembly and disassembly. Facilitates histone deposition through both replication-dependent and replication-independent chromatin assembly pathways. Cooperates with chromatin assembly factor 1 (CAF-1) to promote replication-dependent chromatin assembly and with the HIR complex to promote replication-independent chromatin assembly, which may occur during transcription and DNA repair. May be required for the maintenance of a subset of replication elongation factors, including DNA polymerase epsilon, the RFC complex and PCNA, at stalled replication forks. Also required for RTT109-dependent acetylation of histone H3 on 'Lys-9' and 'Lys-56'. Promotion of RTT109-mediated histone H3 'Lys-56' acetylation is dependent on interactions with histone H3 pre-acetylated on 'Lys-14'. The polypeptide is Histone chaperone ASF1 (Saccharomyces cerevisiae (strain ATCC 204508 / S288c) (Baker's yeast)).